The primary structure comprises 274 residues: ATP synthase subunit a (274 aa).

The next 5 membrane-spanning stretches (helical) occupy residues 43–63 (TLNI…LYVF), 103–123 (VIAP…VMDL), 144–164 (VVPT…FVLI), 223–243 (LIFI…LSLP), and 245–265 (AIFH…LTIV).

This sequence belongs to the ATPase A chain family. As to quaternary structure, F-type ATPases have 2 components, CF(1) - the catalytic core - and CF(0) - the membrane proton channel. CF(1) has five subunits: alpha(3), beta(3), gamma(1), delta(1), epsilon(1). CF(0) has three main subunits: a(1), b(2) and c(9-12). The alpha and beta chains form an alternating ring which encloses part of the gamma chain. CF(1) is attached to CF(0) by a central stalk formed by the gamma and epsilon chains, while a peripheral stalk is formed by the delta and b chains.

It localises to the cell inner membrane. Its function is as follows. Key component of the proton channel; it plays a direct role in the translocation of protons across the membrane. The chain is ATP synthase subunit a from Photorhabdus laumondii subsp. laumondii (strain DSM 15139 / CIP 105565 / TT01) (Photorhabdus luminescens subsp. laumondii).